Consider the following 317-residue polypeptide: tRNA pseudouridine synthase B (317 aa).

Asp47 acts as the Nucleophile in catalysis.

The protein belongs to the pseudouridine synthase TruB family. Type 1 subfamily.

The catalysed reaction is uridine(55) in tRNA = pseudouridine(55) in tRNA. Its function is as follows. Responsible for synthesis of pseudouridine from uracil-55 in the psi GC loop of transfer RNAs. The chain is tRNA pseudouridine synthase B from Shewanella sp. (strain ANA-3).